Reading from the N-terminus, the 374-residue chain is Chaperone protein DnaJ (374 aa).

A J domain is found at 5–70; sequence DYYEILEIER…GKRQLYDRYG (66 aa). Residues 136–213 form a CR-type zinc finger; that stretch reads GCKKEIKIRY…CNGKGHENKE (78 aa). Zn(2+) is bound by residues Cys-149, Cys-152, Cys-165, Cys-168, Cys-187, Cys-190, Cys-201, and Cys-204. CXXCXGXG motif repeat units lie at residues 149-156, 165-172, 187-194, and 201-208; these read CPDCKGTG, CPDCGGRG, CPKCGGSG, and CPKCNGKG.

Belongs to the DnaJ family. In terms of assembly, homodimer. The cofactor is Zn(2+).

It localises to the cytoplasm. Functionally, participates actively in the response to hyperosmotic and heat shock by preventing the aggregation of stress-denatured proteins and by disaggregating proteins, also in an autonomous, DnaK-independent fashion. Unfolded proteins bind initially to DnaJ; upon interaction with the DnaJ-bound protein, DnaK hydrolyzes its bound ATP, resulting in the formation of a stable complex. GrpE releases ADP from DnaK; ATP binding to DnaK triggers the release of the substrate protein, thus completing the reaction cycle. Several rounds of ATP-dependent interactions between DnaJ, DnaK and GrpE are required for fully efficient folding. Also involved, together with DnaK and GrpE, in the DNA replication of plasmids through activation of initiation proteins. In Wolinella succinogenes (strain ATCC 29543 / DSM 1740 / CCUG 13145 / JCM 31913 / LMG 7466 / NCTC 11488 / FDC 602W) (Vibrio succinogenes), this protein is Chaperone protein DnaJ.